Here is a 132-residue protein sequence, read N- to C-terminus: MTSDVIANMITSIRNANLRKIKVIELPATKITKSIGKILLQEGFIDNLREREENNKNFLILTLRSQRRKHKASITTIRRISKPGLRIYSNHQEIPKVLGGIGIVILSTSQGIMSDRQARQNRIGGEILCYIW.

It belongs to the universal ribosomal protein uS8 family. Part of the 30S ribosomal subunit.

Its subcellular location is the plastid. It is found in the chloroplast. Its function is as follows. One of the primary rRNA binding proteins, it binds directly to 16S rRNA central domain where it helps coordinate assembly of the platform of the 30S subunit. The chain is Small ribosomal subunit protein uS8c (rps8) from Chaetosphaeridium globosum (Charophycean green alga).